The primary structure comprises 630 residues: Threonine--tRNA ligase (630 aa).

The interval 1 to 137 (MKVLLIHSDY…PLSELSRKIT (137 aa)) is editing domain. Residues 207–506 (PHVKFITEKE…ADAGAPPMLP (300 aa)) form a catalytic region. The Zn(2+) site is built by C299, H351, and H475.

This sequence belongs to the class-II aminoacyl-tRNA synthetase family. Homodimer. It depends on Zn(2+) as a cofactor.

The protein localises to the cytoplasm. The catalysed reaction is tRNA(Thr) + L-threonine + ATP = L-threonyl-tRNA(Thr) + AMP + diphosphate + H(+). Functionally, catalyzes the attachment of threonine to tRNA(Thr) in a two-step reaction: L-threonine is first activated by ATP to form Thr-AMP and then transferred to the acceptor end of tRNA(Thr). Also edits incorrectly charged L-seryl-tRNA(Thr). The chain is Threonine--tRNA ligase from Methanococcus aeolicus (strain ATCC BAA-1280 / DSM 17508 / OCM 812 / Nankai-3).